The following is a 210-amino-acid chain: RNA chaperone ProQ (210 aa).

The span at His-98 to Ala-127 shows a compositional bias: basic and acidic residues. Residues His-98–Glu-155 form a disordered region.

It belongs to the ProQ family.

It is found in the cytoplasm. In terms of biological role, RNA chaperone with significant RNA binding, RNA strand exchange and RNA duplexing activities. This Aliivibrio salmonicida (strain LFI1238) (Vibrio salmonicida (strain LFI1238)) protein is RNA chaperone ProQ.